Here is a 118-residue protein sequence, read N- to C-terminus: MAGRTVTRVDLCEAVYQKVGLSRTESSAFVELVLKEITDCLERGETVKLSSFGSFLVRQKGQRIGRNPKTGTEVPISPRRVMVFKPSAILKQRINANGAMPMSTEESDENTAQSASGG.

Residues 97 to 118 (NGAMPMSTEESDENTAQSASGG) form a disordered region.

Belongs to the bacterial histone-like protein family. As to quaternary structure, heterodimer of an alpha and a beta chain.

In terms of biological role, this protein is one of the two subunits of integration host factor, a specific DNA-binding protein that functions in genetic recombination as well as in transcriptional and translational control. This Rhodopseudomonas palustris (strain ATCC BAA-98 / CGA009) protein is Integration host factor subunit alpha.